A 202-amino-acid chain; its full sequence is Protein GrpE (202 aa).

Residues 1–14 show a composition bias toward polar residues; that stretch reads MENTQENPTSQNPT. The disordered stretch occupies residues 1–58; it reads MENTQENPTSQNPTPADEAARQAAEAASGEPQDQARQPAAAAGEQPAQAQPAGAEAAL. Over residues 21–58 the composition is skewed to low complexity; sequence RQAAEAASGEPQDQARQPAAAAGEQPAQAQPAGAEAAL.

It belongs to the GrpE family. As to quaternary structure, homodimer.

Its subcellular location is the cytoplasm. Participates actively in the response to hyperosmotic and heat shock by preventing the aggregation of stress-denatured proteins, in association with DnaK and GrpE. It is the nucleotide exchange factor for DnaK and may function as a thermosensor. Unfolded proteins bind initially to DnaJ; upon interaction with the DnaJ-bound protein, DnaK hydrolyzes its bound ATP, resulting in the formation of a stable complex. GrpE releases ADP from DnaK; ATP binding to DnaK triggers the release of the substrate protein, thus completing the reaction cycle. Several rounds of ATP-dependent interactions between DnaJ, DnaK and GrpE are required for fully efficient folding. The polypeptide is Protein GrpE (Paraburkholderia phymatum (strain DSM 17167 / CIP 108236 / LMG 21445 / STM815) (Burkholderia phymatum)).